Here is a 310-residue protein sequence, read N- to C-terminus: ADP-L-glycero-D-manno-heptose-6-epimerase (310 aa).

NADP(+)-binding positions include 10-11 (FI), 31-32 (DN), Lys38, Lys53, 75-79 (EGACS), and Asn92. Catalysis depends on Tyr140, which acts as the Proton acceptor. Position 144 (Lys144) interacts with NADP(+). Asn169 contributes to the substrate binding site. NADP(+)-binding residues include Val170 and Lys178. Catalysis depends on Lys178, which acts as the Proton acceptor. Substrate is bound by residues Ser180, His187, 201–204 (FEGS), Arg209, and Tyr272.

The protein belongs to the NAD(P)-dependent epimerase/dehydratase family. HldD subfamily. Homopentamer. NADP(+) is required as a cofactor.

The enzyme catalyses ADP-D-glycero-beta-D-manno-heptose = ADP-L-glycero-beta-D-manno-heptose. Its pathway is nucleotide-sugar biosynthesis; ADP-L-glycero-beta-D-manno-heptose biosynthesis; ADP-L-glycero-beta-D-manno-heptose from D-glycero-beta-D-manno-heptose 7-phosphate: step 4/4. Catalyzes the interconversion between ADP-D-glycero-beta-D-manno-heptose and ADP-L-glycero-beta-D-manno-heptose via an epimerization at carbon 6 of the heptose. In Citrobacter koseri (strain ATCC BAA-895 / CDC 4225-83 / SGSC4696), this protein is ADP-L-glycero-D-manno-heptose-6-epimerase.